The following is a 95-amino-acid chain: Small ribosomal subunit protein uS19 (95 aa).

The protein belongs to the universal ribosomal protein uS19 family.

Protein S19 forms a complex with S13 that binds strongly to the 16S ribosomal RNA. The chain is Small ribosomal subunit protein uS19 from Thermodesulfovibrio yellowstonii (strain ATCC 51303 / DSM 11347 / YP87).